The primary structure comprises 136 residues: Large ribosomal subunit protein uL16 (136 aa).

It belongs to the universal ribosomal protein uL16 family. In terms of assembly, part of the 50S ribosomal subunit.

In terms of biological role, binds 23S rRNA and is also seen to make contacts with the A and possibly P site tRNAs. The polypeptide is Large ribosomal subunit protein uL16 (Rickettsia canadensis (strain McKiel)).